Here is a 334-residue protein sequence, read N- to C-terminus: Ornithine carbamoyltransferase (334 aa).

Residues 57 to 60 (STRT), Q84, R108, and 135 to 138 (HPTQ) each bind carbamoyl phosphate. L-ornithine-binding positions include N168, D232, and 236 to 237 (SM). Carbamoyl phosphate is bound by residues 274–275 (CL) and R321.

Belongs to the aspartate/ornithine carbamoyltransferase superfamily. OTCase family.

The protein resides in the cytoplasm. The catalysed reaction is carbamoyl phosphate + L-ornithine = L-citrulline + phosphate + H(+). It participates in amino-acid degradation; L-arginine degradation via ADI pathway; carbamoyl phosphate from L-arginine: step 2/2. Functionally, reversibly catalyzes the transfer of the carbamoyl group from carbamoyl phosphate (CP) to the N(epsilon) atom of ornithine (ORN) to produce L-citrulline. The polypeptide is Ornithine carbamoyltransferase (Haemophilus influenzae (strain PittGG)).